We begin with the raw amino-acid sequence, 633 residues long: Extracellular metalloproteinase 5 (633 aa).

A signal peptide spans 1-21 (MHGLLLAAAGLLSLPLHVVAH). Residues 22–245 (PQPSTSLAGR…HNVVDYVSHA (224 aa)) constitute a propeptide that is removed on maturation. N-linked (GlcNAc...) asparagine glycosylation is present at Asn285. His428 is a Zn(2+) binding site. The active site involves Glu429. His432 contributes to the Zn(2+) binding site. N-linked (GlcNAc...) asparagine glycans are attached at residues Asn592 and Asn621.

The protein belongs to the peptidase M36 family. The cofactor is Zn(2+).

It localises to the secreted. Functionally, secreted metalloproteinase probably acting as a virulence factor. This Trichophyton rubrum (Athlete's foot fungus) protein is Extracellular metalloproteinase 5 (MEP5).